We begin with the raw amino-acid sequence, 982 residues long: Ubiquitin carboxyl-terminal hydrolase 37 (982 aa).

The short motif at 32–34 (KEN) is the KEN box 1 element. 2 short sequence motifs (D-box) span residues 71–79 (RLMLTLQDN) and 96–105 (RLFLDAVHQN). Residue S115 is modified to Phosphoserine. A disordered region spans residues 128–162 (RTSQKETHRQLSYSDNQVSSKRGSLETKDDIPFRK). The segment covering 137-149 (QLSYSDNQVSSKR) has biased composition (polar residues). The span at 150 to 160 (GSLETKDDIPF) shows a compositional bias: basic and acidic residues. The D-box 3 motif lies at 161–169 (RKVLGNPGR). Residue S171 is modified to Phosphoserine. The span at 183-201 (TRTIPSLTSTSTPLRSGLL) shows a compositional bias: low complexity. Residues 183 to 307 (TRTIPSLTST…TPSAKRSLGF (125 aa)) form a disordered region. Position 213 is a phosphoserine (S213). The short motif at 224-226 (KEN) is the KEN box 2 element. Positions 246–260 (SREKQLSLKQSEENR) are enriched in basic and acidic residues. Positions 282–301 (YSPSSTNLDRTNISSQTPSA) are enriched in polar residues. In terms of domain architecture, USP spans 343-954 (QGFSNLGNTC…SGYIFFYMHK (612 aa)). C352 acts as the Nucleophile in catalysis. S631 is subject to Phosphoserine; by CDK2. S653 and S655 each carry phosphoserine. Disordered stretches follow at residues 672–705 (ISSSEQQQEDLEKDSKSCKLEPDKSELENSGFDA) and 720–798 (KREA…GEVD). Composition is skewed to basic and acidic residues over residues 684–698 (KDSKSCKLEPDKSEL) and 720–735 (KREASPSPSHEDDDKP). One can recognise a UIM 1 domain in the interval 707–726 (SEEELLAAVLEISKREASPS). S773 is modified (phosphoserine). Over residues 777–789 (ITKDCDENKENKT) the composition is skewed to basic and acidic residues. The KEN box 3 signature appears at 785-787 (KEN). UIM domains are found at residues 809–828 (REEQELQQALAQSLQEQEAW) and 831–850 (KEDDDLKRATELSLQEFNNS). H909 (proton acceptor) is an active-site residue.

This sequence belongs to the peptidase C19 family. In terms of assembly, interacts with FZR1/CDH1. Interacts with CDT1. In terms of processing, polyubiquitinated via 'Lys-11'-linked ubiquitin by the APC(CDH1) complex during late mitosis, leading to its degradation. Able to mediate auto-deubiquitination. Phosphorylated at Ser-631 by CDK2 during G1/S phase but not during mitosis; phosphorylation at Ser-631 is required for deubiquitinase activity. Also polyubiquitinated during early G1 phase, without leading to degradation. Phosphorylated at Ser-115 by ATM following DNA damage, which in turn increases its deubiquitination activity towards BLM.

The protein localises to the nucleus. It is found in the chromosome. It catalyses the reaction Thiol-dependent hydrolysis of ester, thioester, amide, peptide and isopeptide bonds formed by the C-terminal Gly of ubiquitin (a 76-residue protein attached to proteins as an intracellular targeting signal).. Its function is as follows. Deubiquitinase that plays a role in different processes including cell cycle regulation, DNA replication or DNA damage response. Antagonizes the anaphase-promoting complex (APC/C) during G1/S transition by mediating deubiquitination of cyclin-A (CCNA1 and CCNA2), thereby promoting S phase entry. Specifically mediates deubiquitination of 'Lys-11'-linked polyubiquitin chains, a specific ubiquitin-linkage type mediated by the APC/C complex. Phosphorylation at Ser-628 during G1/S phase maximizes the deubiquitinase activity, leading to prevent degradation of cyclin-A (CCNA1 and CCNA2). Plays an important role in the regulation of DNA replication by stabilizing the licensing factor CDT1. Also plays an essential role beyond S-phase entry to promote the efficiency and fidelity of replication by deubiquitinating checkpoint kinase 1/CHK1, promoting its stability. Sustains the DNA damage response (DDR) by deubiquitinating and stabilizing the ATP-dependent DNA helicase BLM. Mechanistically, DNA double-strand breaks (DSB) promotes ATM-mediated phosphorylation of USP37 and enhances the binding between USP37 and BLM. Promotes cell migration by deubiquitinating and stabilizing the epithelial-mesenchymal transition (EMT)-inducing transcription factor SNAI. Plays a role in the regulation of mitotic spindle assembly and mitotic progression by associating with chromatin-associated WAPL and stabilizing it through deubiquitination. The chain is Ubiquitin carboxyl-terminal hydrolase 37 (USP37) from Sus scrofa (Pig).